Reading from the N-terminus, the 275-residue chain is Probable histone chaperone asf-1 (275 aa).

Composition is skewed to acidic residues over residues 157–166 (EDPVAEPVED), 183–207 (DGQEDDDEEEEDDDEMEANAEEVDL), and 230–247 (KMEDDGANEDVDMADDEP). Residues 157–275 (EDPVAEPVED…SDKTNNEMVQ (119 aa)) are disordered. Positions 265–275 (LSDKTNNEMVQ) are enriched in basic and acidic residues.

The protein belongs to the ASF1 family. In terms of assembly, interacts with histone H3 and histone H4.

Its subcellular location is the nucleus. Functionally, histone chaperone that facilitates histone deposition and histone exchange and removal during nucleosome assembly and disassembly. The sequence is that of Probable histone chaperone asf-1 from Caenorhabditis elegans.